The primary structure comprises 231 residues: Biosynthetic peptidoglycan transglycosylase (231 aa).

Residues 12–34 (AAVLAGLALLLVALAVSYRWVPP) form a helical membrane-spanning segment.

This sequence belongs to the glycosyltransferase 51 family.

It is found in the cell inner membrane. The catalysed reaction is [GlcNAc-(1-&gt;4)-Mur2Ac(oyl-L-Ala-gamma-D-Glu-L-Lys-D-Ala-D-Ala)](n)-di-trans,octa-cis-undecaprenyl diphosphate + beta-D-GlcNAc-(1-&gt;4)-Mur2Ac(oyl-L-Ala-gamma-D-Glu-L-Lys-D-Ala-D-Ala)-di-trans,octa-cis-undecaprenyl diphosphate = [GlcNAc-(1-&gt;4)-Mur2Ac(oyl-L-Ala-gamma-D-Glu-L-Lys-D-Ala-D-Ala)](n+1)-di-trans,octa-cis-undecaprenyl diphosphate + di-trans,octa-cis-undecaprenyl diphosphate + H(+). It participates in cell wall biogenesis; peptidoglycan biosynthesis. Its function is as follows. Peptidoglycan polymerase that catalyzes glycan chain elongation from lipid-linked precursors. In Rhodospirillum centenum (strain ATCC 51521 / SW), this protein is Biosynthetic peptidoglycan transglycosylase.